Reading from the N-terminus, the 1332-residue chain is DNA-directed RNA polymerase subunit beta' (1332 aa).

C60, C62, C75, and C78 together coordinate Zn(2+). The Mg(2+) site is built by D535, D537, and D539. Zn(2+)-binding residues include C894, C977, C984, and C987.

It belongs to the RNA polymerase beta' chain family. As to quaternary structure, the RNAP catalytic core consists of 2 alpha, 1 beta, 1 beta' and 1 omega subunit. When a sigma factor is associated with the core the holoenzyme is formed, which can initiate transcription. Requires Mg(2+) as cofactor. It depends on Zn(2+) as a cofactor.

The catalysed reaction is RNA(n) + a ribonucleoside 5'-triphosphate = RNA(n+1) + diphosphate. Its function is as follows. DNA-dependent RNA polymerase catalyzes the transcription of DNA into RNA using the four ribonucleoside triphosphates as substrates. This Corynebacterium kroppenstedtii (strain DSM 44385 / JCM 11950 / CIP 105744 / CCUG 35717) protein is DNA-directed RNA polymerase subunit beta'.